A 197-amino-acid chain; its full sequence is Holliday junction branch migration complex subunit RuvA (197 aa).

The tract at residues 1-64 (MIDSIVGIIQ…LSELECYGFL (64 aa)) is domain I. A domain II region spans residues 65–143 (TREERELFLK…KEFKVASTSG (79 aa)). The flexible linker stretch occupies residues 144-152 (KEEKTYEKL). Residues 152 to 197 (LEEISLALLSLGYDIDEVNQVLSSEDFSELSLEDGIKLALKKLSKI) form a domain III region.

This sequence belongs to the RuvA family. Homotetramer. Forms an RuvA(8)-RuvB(12)-Holliday junction (HJ) complex. HJ DNA is sandwiched between 2 RuvA tetramers; dsDNA enters through RuvA and exits via RuvB. An RuvB hexamer assembles on each DNA strand where it exits the tetramer. Each RuvB hexamer is contacted by two RuvA subunits (via domain III) on 2 adjacent RuvB subunits; this complex drives branch migration. In the full resolvosome a probable DNA-RuvA(4)-RuvB(12)-RuvC(2) complex forms which resolves the HJ.

Its subcellular location is the cytoplasm. Its function is as follows. The RuvA-RuvB-RuvC complex processes Holliday junction (HJ) DNA during genetic recombination and DNA repair, while the RuvA-RuvB complex plays an important role in the rescue of blocked DNA replication forks via replication fork reversal (RFR). RuvA specifically binds to HJ cruciform DNA, conferring on it an open structure. The RuvB hexamer acts as an ATP-dependent pump, pulling dsDNA into and through the RuvAB complex. HJ branch migration allows RuvC to scan DNA until it finds its consensus sequence, where it cleaves and resolves the cruciform DNA. The chain is Holliday junction branch migration complex subunit RuvA from Caldicellulosiruptor bescii (strain ATCC BAA-1888 / DSM 6725 / KCTC 15123 / Z-1320) (Anaerocellum thermophilum).